A 67-amino-acid polypeptide reads, in one-letter code: Probable archaeal histone 3 (67 aa).

Interaction with DNA regions lie at residues 20-22 and 54-57; these read RVS and KTVK.

It belongs to the archaeal histone HMF family. Homodimer or heterodimer with another histone. Dimers then assemble into higher oligomers, with the DNA wrapped around the protein core.

The protein resides in the cytoplasm. It is found in the chromosome. Its function is as follows. Binds and compact DNA (95 to 150 base pairs) to form nucleosome-like structures that contain positive DNA supercoils. Increases the resistance of DNA to thermal denaturation (in vitro). The polypeptide is Probable archaeal histone 3 (Methanocaldococcus jannaschii (strain ATCC 43067 / DSM 2661 / JAL-1 / JCM 10045 / NBRC 100440) (Methanococcus jannaschii)).